Here is a 34-residue protein sequence, read N- to C-terminus: Brevinin-2Rf (34 aa).

A disulfide bond links C28 and C34.

In terms of tissue distribution, expressed by the skin glands.

The protein resides in the secreted. Its function is as follows. Antimicrobial peptide. The chain is Brevinin-2Rf from Pelophylax ridibundus (Marsh frog).